The primary structure comprises 225 residues: E3 ubiquitin-protein ligase ATL76 (225 aa).

Residues 59 to 79 traverse the membrane as a helical segment; it reads LMLLSVLICGIICCLGLHYII. The RING-type; atypical zinc finger occupies 135–177; the sequence is CVICLSDFVSGEQLRLLPKCNHGFHVRCIDKWLQHHLTCPKCR.

It belongs to the RING-type zinc finger family. ATL subfamily.

The protein localises to the membrane. The enzyme catalyses S-ubiquitinyl-[E2 ubiquitin-conjugating enzyme]-L-cysteine + [acceptor protein]-L-lysine = [E2 ubiquitin-conjugating enzyme]-L-cysteine + N(6)-ubiquitinyl-[acceptor protein]-L-lysine.. The protein operates within protein modification; protein ubiquitination. In terms of biological role, E3 ubiquitin-protein ligase able to catalyze polyubiquitination with ubiquitin-conjugating enzyme E2 UBC8 in vitro. The chain is E3 ubiquitin-protein ligase ATL76 (ATL76) from Arabidopsis thaliana (Mouse-ear cress).